The sequence spans 496 residues: Alanine aminotransferase 1 (496 aa).

Alanine 2 carries the N-acetylalanine modification. Phosphothreonine is present on threonine 22. N6-(pyridoxal phosphate)lysine is present on lysine 314.

Belongs to the class-I pyridoxal-phosphate-dependent aminotransferase family. Alanine aminotransferase subfamily. Homodimer. Requires pyridoxal 5'-phosphate as cofactor.

It is found in the cytoplasm. It catalyses the reaction L-alanine + 2-oxoglutarate = pyruvate + L-glutamate. It participates in amino-acid degradation; L-alanine degradation via transaminase pathway; pyruvate from L-alanine: step 1/1. Catalyzes the reversible transamination between alanine and 2-oxoglutarate to form pyruvate and glutamate. Participates in cellular nitrogen metabolism and also in liver gluconeogenesis starting with precursors transported from skeletal muscles. The chain is Alanine aminotransferase 1 (GPT) from Bos taurus (Bovine).